The primary structure comprises 235 residues: Large ribosomal subunit protein uL1 (235 aa).

It belongs to the universal ribosomal protein uL1 family. In terms of assembly, part of the 50S ribosomal subunit.

In terms of biological role, binds directly to 23S rRNA. The L1 stalk is quite mobile in the ribosome, and is involved in E site tRNA release. Its function is as follows. Protein L1 is also a translational repressor protein, it controls the translation of the L11 operon by binding to its mRNA. This chain is Large ribosomal subunit protein uL1, found in Halothermothrix orenii (strain H 168 / OCM 544 / DSM 9562).